A 69-amino-acid polypeptide reads, in one-letter code: Putative membrane protein insertion efficiency factor (69 aa).

It belongs to the UPF0161 family.

It localises to the cell membrane. Could be involved in insertion of integral membrane proteins into the membrane. This Thermomicrobium roseum (strain ATCC 27502 / DSM 5159 / P-2) protein is Putative membrane protein insertion efficiency factor.